The following is a 157-amino-acid chain: Protein Smg homolog (157 aa).

It belongs to the Smg family.

The sequence is that of Protein Smg homolog from Shewanella halifaxensis (strain HAW-EB4).